The primary structure comprises 403 residues: MSKKVEVNKVVVAYSGGLDTSVIIPWLKENYNCEVIAFVADVGQGEEELEGIEAKAIASGATECYIADLKEEMVSEYIFPTLKTGALYEGKYLLGTSMARPIIAKAQVEVARNVGADALCHGCTGKGNDQIRFEGAFAALAPDLHVIAPWREWDLVSREECLDYLAERNIPCTASLTKIYSRDANAWHISTEGGVLEETWNAPNDDCWAWTVDPEQAPNESETISLKVEKGAVVAVDGKAMTPYEVVVYLNEKGAKHGVGRIDIVENRLVGMKSRGCYETPGGTIINEALRAVEQLVLDKTSFEFREELGIKASHLVYDGRWFTPLCKSILAASEELAKDVNGEVVIKLYKGHATVIQKRSDNSLYSEEFATFGADEVYDQSHAEGFIRLYSLSSRIRALNSK.

Residues 13 to 21 (AYSGGLDTS) and Ala-40 contribute to the ATP site. The L-citrulline site is built by Tyr-92 and Ser-97. Gly-122 contacts ATP. 3 residues coordinate L-aspartate: Thr-124, Asn-128, and Asp-129. Residue Asn-128 participates in L-citrulline binding. Arg-132, Ser-181, Ser-190, Glu-266, and Tyr-278 together coordinate L-citrulline.

This sequence belongs to the argininosuccinate synthase family. Type 1 subfamily. As to quaternary structure, homotetramer.

The protein localises to the cytoplasm. It catalyses the reaction L-citrulline + L-aspartate + ATP = 2-(N(omega)-L-arginino)succinate + AMP + diphosphate + H(+). Its pathway is amino-acid biosynthesis; L-arginine biosynthesis; L-arginine from L-ornithine and carbamoyl phosphate: step 2/3. The polypeptide is Argininosuccinate synthase (Aliivibrio fischeri (strain MJ11) (Vibrio fischeri)).